The following is a 237-amino-acid chain: MDNGDWGYMMSDPVTLNVGGHLYTTSLTTLTRYPDSMLGAMFGGDFPTARDPQGNYFIDRDGPLFRYVLNFLRTSELTLPLDFKEFDLLRKEADFYQIEPLIQCLNDPRPLYPMDTFEEVVELSSTRKLSKYSNPVAVIITQLTITTKVHSLLEGISNYFTKWNKHMMDTRDCQVSFTFGPCDYHQEVSLRVHLMEYITKQGFTIRNTRVHHMSERANENTVEHNWTFCRLARKTDD.

Positions 1-104 are interaction with ANK1 isoform Mu7; it reads MDNGDWGYMM…FYQIEPLIQC (104 aa). The interval 10-110 is interaction with CUL3; the sequence is MSDPVTLNVG…LIQCLNDPRP (101 aa). The BTB domain maps to 12-81; that stretch reads DPVTLNVGGH…LRTSELTLPL (70 aa). Positions 113 to 187 are interaction with USP21; that stretch reads PMDTFEEVVE…TFGPCDYHQE (75 aa).

Homopentamer. Interacts with KCTD11; KCTD6 and KCTD11 may associate in heteropentameric assemblies. Interacts (via BTB domain) with CUL3; initially a 4:4 stoichiometry has been reported, however, electron microscopy revealed pentameric states with a five-pointed pinwheel shape. The interaction with CUL3 is indicative for a participation in a BCR (BTB-CUL3-RBX1) E3 ubiquitin-protein ligase complex. Interacts with HDAC1; probably indirect as the interaction requires the presence of KCTD11. Interacts with USP21 (preferentially catalytic inactive form). Interacts with ANK1 isoform Mu7; detected in striated muscle. Interacts with USP11. As to expression, highly expressed in cerebellum and brain.

The protein localises to the cytoplasm. The protein resides in the myofibril. Its subcellular location is the sarcomere. It localises to the m line. It functions in the pathway protein modification; protein ubiquitination. Probable substrate-specific adapter of a BCR (BTB-CUL3-RBX1) E3 ubiquitin-protein ligase complex mediating the ubiquitination and subsequent proteasomal degradation of target proteins. Promotes the ubiquitination of HDAC1; the function seems to depend on KCTD11:KCTD6 oligomerization. Can function as antagonist of the Hedgehog pathway by affecting the nuclear transfer of transcription factor GLI1; the function probably occurs via HDAC1 down-regulation, keeping GLI1 acetylated and inactive. Inhibits cell growth and tumorigenicity of medulloblastoma (MDB). Involved in regulating protein levels of ANK1 isoform Mu7 probably implicating CUL3-dependent proteasomal degradation. The polypeptide is BTB/POZ domain-containing protein KCTD6 (Kctd6) (Mus musculus (Mouse)).